A 205-amino-acid chain; its full sequence is Holliday junction branch migration complex subunit RuvA (205 aa).

Positions 1–64 (MIGRLKGILI…ENLHQLFGFA (64 aa)) are domain I. Residues 65 to 143 (EQRDRSLFRT…NWDLPQGDML (79 aa)) form a domain II region. Residues 144–153 (AHGEIQAIAS) are flexible linker. The domain III stretch occupies residues 153–205 (SDNDIYAEAESALIALGYKPVDAAKMVASAAKQKPEARSEELIRIALRSLAGV).

This sequence belongs to the RuvA family. As to quaternary structure, homotetramer. Forms an RuvA(8)-RuvB(12)-Holliday junction (HJ) complex. HJ DNA is sandwiched between 2 RuvA tetramers; dsDNA enters through RuvA and exits via RuvB. An RuvB hexamer assembles on each DNA strand where it exits the tetramer. Each RuvB hexamer is contacted by two RuvA subunits (via domain III) on 2 adjacent RuvB subunits; this complex drives branch migration. In the full resolvosome a probable DNA-RuvA(4)-RuvB(12)-RuvC(2) complex forms which resolves the HJ.

The protein localises to the cytoplasm. Its function is as follows. The RuvA-RuvB-RuvC complex processes Holliday junction (HJ) DNA during genetic recombination and DNA repair, while the RuvA-RuvB complex plays an important role in the rescue of blocked DNA replication forks via replication fork reversal (RFR). RuvA specifically binds to HJ cruciform DNA, conferring on it an open structure. The RuvB hexamer acts as an ATP-dependent pump, pulling dsDNA into and through the RuvAB complex. HJ branch migration allows RuvC to scan DNA until it finds its consensus sequence, where it cleaves and resolves the cruciform DNA. In Cellvibrio japonicus (strain Ueda107) (Pseudomonas fluorescens subsp. cellulosa), this protein is Holliday junction branch migration complex subunit RuvA.